The following is a 208-amino-acid chain: Uracil phosphoribosyltransferase (208 aa).

Residues Arg-78, Arg-103, and 130-138 contribute to the 5-phospho-alpha-D-ribose 1-diphosphate site; that span reads DPMLATGVS. Residues Ile-193 and 198-200 contribute to the uracil site; that span reads GDA. Position 199 (Asp-199) interacts with 5-phospho-alpha-D-ribose 1-diphosphate.

Belongs to the UPRTase family. Mg(2+) is required as a cofactor.

The catalysed reaction is UMP + diphosphate = 5-phospho-alpha-D-ribose 1-diphosphate + uracil. It functions in the pathway pyrimidine metabolism; UMP biosynthesis via salvage pathway; UMP from uracil: step 1/1. Its activity is regulated as follows. Allosterically activated by GTP. Functionally, catalyzes the conversion of uracil and 5-phospho-alpha-D-ribose 1-diphosphate (PRPP) to UMP and diphosphate. The chain is Uracil phosphoribosyltransferase from Thermosipho africanus (strain TCF52B).